The sequence spans 415 residues: Gamma-glutamyl phosphate reductase (415 aa).

It belongs to the gamma-glutamyl phosphate reductase family.

It localises to the cytoplasm. It carries out the reaction L-glutamate 5-semialdehyde + phosphate + NADP(+) = L-glutamyl 5-phosphate + NADPH + H(+). It functions in the pathway amino-acid biosynthesis; L-proline biosynthesis; L-glutamate 5-semialdehyde from L-glutamate: step 2/2. In terms of biological role, catalyzes the NADPH-dependent reduction of L-glutamate 5-phosphate into L-glutamate 5-semialdehyde and phosphate. The product spontaneously undergoes cyclization to form 1-pyrroline-5-carboxylate. The protein is Gamma-glutamyl phosphate reductase of Listeria monocytogenes serotype 4a (strain HCC23).